A 185-amino-acid polypeptide reads, in one-letter code: Elongation factor P (185 aa).

It belongs to the elongation factor P family.

It localises to the cytoplasm. It participates in protein biosynthesis; polypeptide chain elongation. Its function is as follows. Involved in peptide bond synthesis. Stimulates efficient translation and peptide-bond synthesis on native or reconstituted 70S ribosomes in vitro. Probably functions indirectly by altering the affinity of the ribosome for aminoacyl-tRNA, thus increasing their reactivity as acceptors for peptidyl transferase. The protein is Elongation factor P of Limosilactobacillus reuteri (strain DSM 20016) (Lactobacillus reuteri).